A 477-amino-acid polypeptide reads, in one-letter code: Proton extrusion protein PxcA (477 aa).

Helical transmembrane passes span 239-259, 354-374, and 437-457; these read FILL…ITFV, GIKN…IIST, and FNFL…KYWI.

The protein belongs to the CemA family.

Its subcellular location is the cell inner membrane. Functionally, required for H(+) efflux immediately after light irradiation to form a rapid H(+) concentration gradient across the thylakoid membranes. Together with PxcL, contributes to transient H(+) uptake following dark to light transition. The chain is Proton extrusion protein PxcA from Trichodesmium erythraeum (strain IMS101).